A 229-amino-acid polypeptide reads, in one-letter code: Putative N-acetylmannosamine-6-phosphate 2-epimerase (229 aa).

The protein belongs to the NanE family.

The enzyme catalyses an N-acyl-D-glucosamine 6-phosphate = an N-acyl-D-mannosamine 6-phosphate. Its pathway is amino-sugar metabolism; N-acetylneuraminate degradation; D-fructose 6-phosphate from N-acetylneuraminate: step 3/5. Converts N-acetylmannosamine-6-phosphate (ManNAc-6-P) to N-acetylglucosamine-6-phosphate (GlcNAc-6-P). This Salmonella arizonae (strain ATCC BAA-731 / CDC346-86 / RSK2980) protein is Putative N-acetylmannosamine-6-phosphate 2-epimerase.